The sequence spans 577 residues: Sulfite reductase [NADPH] hemoprotein beta-component (577 aa).

[4Fe-4S] cluster is bound by residues cysteine 441, cysteine 447, cysteine 486, and cysteine 490. Residue cysteine 490 participates in siroheme binding.

It belongs to the nitrite and sulfite reductase 4Fe-4S domain family. Alpha(8)-beta(8). The alpha component is a flavoprotein, the beta component is a hemoprotein. The cofactor is siroheme. It depends on [4Fe-4S] cluster as a cofactor.

It carries out the reaction hydrogen sulfide + 3 NADP(+) + 3 H2O = sulfite + 3 NADPH + 4 H(+). The protein operates within sulfur metabolism; hydrogen sulfide biosynthesis; hydrogen sulfide from sulfite (NADPH route): step 1/1. In terms of biological role, component of the sulfite reductase complex that catalyzes the 6-electron reduction of sulfite to sulfide. This is one of several activities required for the biosynthesis of L-cysteine from sulfate. In Pectobacterium atrosepticum (strain SCRI 1043 / ATCC BAA-672) (Erwinia carotovora subsp. atroseptica), this protein is Sulfite reductase [NADPH] hemoprotein beta-component.